The primary structure comprises 57 residues: Small ribosomal subunit protein bS21 (57 aa).

The protein belongs to the bacterial ribosomal protein bS21 family.

In Geobacillus kaustophilus (strain HTA426), this protein is Small ribosomal subunit protein bS21.